Here is a 264-residue protein sequence, read N- to C-terminus: S-adenosylmethionine decarboxylase proenzyme (264 aa).

Catalysis depends on S113, which acts as the Schiff-base intermediate with substrate; via pyruvic acid. At S113 the chain carries Pyruvic acid (Ser); by autocatalysis. The active-site Proton acceptor; for processing activity is the H118. C141 (proton donor; for catalytic activity) is an active-site residue.

It belongs to the prokaryotic AdoMetDC family. Type 2 subfamily. As to quaternary structure, heterooctamer of four alpha and four beta chains arranged as a tetramer of alpha/beta heterodimers. Requires pyruvate as cofactor. In terms of processing, is synthesized initially as an inactive proenzyme. Formation of the active enzyme involves a self-maturation process in which the active site pyruvoyl group is generated from an internal serine residue via an autocatalytic post-translational modification. Two non-identical subunits are generated from the proenzyme in this reaction, and the pyruvate is formed at the N-terminus of the alpha chain, which is derived from the carboxyl end of the proenzyme. The post-translation cleavage follows an unusual pathway, termed non-hydrolytic serinolysis, in which the side chain hydroxyl group of the serine supplies its oxygen atom to form the C-terminus of the beta chain, while the remainder of the serine residue undergoes an oxidative deamination to produce ammonia and the pyruvoyl group blocking the N-terminus of the alpha chain.

It catalyses the reaction S-adenosyl-L-methionine + H(+) = S-adenosyl 3-(methylsulfanyl)propylamine + CO2. It participates in amine and polyamine biosynthesis; S-adenosylmethioninamine biosynthesis; S-adenosylmethioninamine from S-adenosyl-L-methionine: step 1/1. Catalyzes the decarboxylation of S-adenosylmethionine to S-adenosylmethioninamine (dcAdoMet), the propylamine donor required for the synthesis of the polyamines spermine and spermidine from the diamine putrescine. This Stenotrophomonas maltophilia (strain R551-3) protein is S-adenosylmethionine decarboxylase proenzyme.